The chain runs to 511 residues: Vesicular acetylcholine transporter (511 aa).

Over 1–36 (MAVGQAKAAMGKISSAIGERSKRISGAMNEPRRKRK) the chain is Cytoplasmic. A helical transmembrane segment spans residues 37 to 57 (ILLVIVCIAMLLDNMLYMVIV). The Lumenal, vesicle segment spans residues 58-108 (PIIPNYLETIRTYKLVYITTPSNGTNGSLLNSTQRAVLERNPNANEDIQIG). N-linked (GlcNAc...) asparagine glycans are attached at residues Asn-80, Asn-83, and Asn-88. A helical transmembrane segment spans residues 109–129 (VLFASKAILQLLSNPFTGTFI). The Cytoplasmic segment spans residues 130 to 135 (DRVGYD). Residues 136–156 (IPLLIGLTIMFFSTITFAFGE) form a helical membrane-spanning segment. Residues 157-165 (SYAILFAAR) lie on the Lumenal, vesicle side of the membrane. The chain crosses the membrane as a helical span at residues 166–186 (SLQGLGSAFADTSGIAMIADK). Residues 187–197 (YTEESERTQAL) are Cytoplasmic-facing. Residues 198–218 (GIALAFISFGSLVAPPFGGVL) traverse the membrane as a helical segment. Over 219 to 225 (YQFAGKW) the chain is Lumenal, vesicle. A helical transmembrane segment spans residues 226–246 (VPFLVLSFVCLLDGILLLMVV). Residues 247–267 (TPFASRTRVNTLQGTPIYKLM) lie on the Cytoplasmic side of the membrane. Residues 268–288 (IDPYIAVVAGALTTCNIPLAF) form a helical membrane-spanning segment. The Lumenal, vesicle segment spans residues 289–306 (LEPTISNWMKKTMNASEW). Asn-302 carries an N-linked (GlcNAc...) asparagine glycan. Residues 307 to 327 (QMGITWLPAFFPHILGVYITV) form a helical membrane-spanning segment. The Cytoplasmic portion of the chain corresponds to 328–337 (KLAAKYPNYQ). Residues 338–358 (WLYGAVGLVIIGASSCTIPAC) traverse the membrane as a helical segment. Residues 359–363 (RNFEE) lie on the Lumenal, vesicle side of the membrane. The chain crosses the membrane as a helical span at residues 364-384 (LIIPLCALCFGIALVDTALLP). Over 385–400 (TLAFLVDIRYVSVYGS) the chain is Cytoplasmic. The helical transmembrane segment at 401 to 421 (VYAIADISYSVAYALGPIMAG) threads the bilayer. Residues 422 to 428 (QIVHDLG) are Lumenal, vesicle-facing. The chain crosses the membrane as a helical span at residues 429–449 (FVQLNLGMGLVNILYAPGLLF). Residues 450–511 (LRNVCQMKPS…VLSDQEGYSE (62 aa)) are Cytoplasmic-facing. The disordered stretch occupies residues 485–511 (EAKEPHGTSSGNHSVHAVLSDQEGYSE).

This sequence belongs to the major facilitator superfamily. Vesicular transporter family. High expression in the electric lobe of the brain.

The protein localises to the membrane. Its function is as follows. Involved in acetylcholine transport into synaptic vesicles. The sequence is that of Vesicular acetylcholine transporter from Torpedo marmorata (Marbled electric ray).